A 1116-amino-acid polypeptide reads, in one-letter code: DNA-directed RNA polymerase subunit beta (1116 aa).

The span at 1070 to 1100 (KIREEEKEREKEREAREMEDPEKIVSKIDAK) shows a compositional bias: basic and acidic residues. The tract at residues 1070–1116 (KIREEEKEREKEREAREMEDPEKIVSKIDAKQKKKYKKTKKQTEKKK) is disordered. Residues 1101–1116 (QKKKYKKTKKQTEKKK) are compositionally biased toward basic residues.

Belongs to the RNA polymerase beta chain family. In plastids the minimal PEP RNA polymerase catalytic core is composed of four subunits: alpha, beta, beta', and beta''. When a (nuclear-encoded) sigma factor is associated with the core the holoenzyme is formed, which can initiate transcription.

The protein localises to the plastid. It is found in the chloroplast. The catalysed reaction is RNA(n) + a ribonucleoside 5'-triphosphate = RNA(n+1) + diphosphate. DNA-dependent RNA polymerase catalyzes the transcription of DNA into RNA using the four ribonucleoside triphosphates as substrates. This chain is DNA-directed RNA polymerase subunit beta, found in Heterosigma akashiwo (Chromophytic alga).